Consider the following 194-residue polypeptide: Peptidyl-tRNA hydrolase (194 aa).

Position 16 (Y16) interacts with tRNA. The Proton acceptor role is filled by H21. F67, N69, and N115 together coordinate tRNA.

The protein belongs to the PTH family. Monomer.

It is found in the cytoplasm. It carries out the reaction an N-acyl-L-alpha-aminoacyl-tRNA + H2O = an N-acyl-L-amino acid + a tRNA + H(+). Its function is as follows. Hydrolyzes ribosome-free peptidyl-tRNAs (with 1 or more amino acids incorporated), which drop off the ribosome during protein synthesis, or as a result of ribosome stalling. Functionally, catalyzes the release of premature peptidyl moieties from peptidyl-tRNA molecules trapped in stalled 50S ribosomal subunits, and thus maintains levels of free tRNAs and 50S ribosomes. This is Peptidyl-tRNA hydrolase from Colwellia psychrerythraea (strain 34H / ATCC BAA-681) (Vibrio psychroerythus).